An 83-amino-acid chain; its full sequence is Mu-theraphotoxin-Hhn2j 3 (83 aa).

Positions 1–21 (MKALMFLALAGLVLLFVVGYA) are cleaved as a signal peptide. Residues 22-48 (SESEEKEFPIELLSKIFAVDVFKGEER) constitute a propeptide that is removed on maturation. 3 cysteine pairs are disulfide-bonded: C50-C65, C57-C70, and C64-C77. L81 is modified (leucine amide).

The protein belongs to the neurotoxin 10 (Hwtx-1) family. 15 (Hntx-3) subfamily. In terms of assembly, monomer. In terms of tissue distribution, expressed by the venom gland.

The protein localises to the secreted. Lethal neurotoxin. Selectively blocks tetrodotoxin-sensitive voltage-gated sodium channels (Nav). Does not affect tetrodotoxin-resistant voltage-gated sodium channels or calcium channels. The polypeptide is Mu-theraphotoxin-Hhn2j 3 (Cyriopagopus hainanus (Chinese bird spider)).